Here is a 366-residue protein sequence, read N- to C-terminus: MAP kinase-activated protein kinase 2 (366 aa).

A Protein kinase domain is found at Lys-30–Ile-291. ATP contacts are provided by residues Leu-36 to Val-44 and Lys-59. Residue Glu-105 to Leu-107 participates in staurosporine binding. Asp-152 (proton acceptor) is an active-site residue. Thr-188 bears the Phosphothreonine; by MAPK14 mark. At Ser-238 the chain carries Phosphoserine; by MAPK14. Ser-294 is subject to Phosphoserine; by autocatalysis. Positions Ser-294–Arg-330 are autoinhibitory helix. Phosphothreonine; by MAPK14 is present on Thr-300. Lys-319 is covalently cross-linked (Glycyl lysine isopeptide (Lys-Gly) (interchain with G-Cter in SUMO)). The short motif at Met-322–Val-331 is the Nuclear export signal (NES) element. A p38 MAPK-binding site region spans residues Asp-332–Ala-356. 2 consecutive short sequence motifs (bipartite nuclear localization signal) follow at residues Lys-337 to Lys-340 and Lys-351 to Lys-355.

Belongs to the protein kinase superfamily. CAMK Ser/Thr protein kinase family. As to quaternary structure, heterodimer with p38-alpha/MAPK14; this heterodimer forms a stable complex: molecules are positioned 'face to face' so that the ATP-binding sites of both kinases are at the heterodimer interface. Interacts with PHC2. Interacts with HSF1. In terms of processing, sumoylation inhibits the protein kinase activity. Post-translationally, phosphorylated and activated by MAP kinase p38-alpha/MAPK14 at Thr-188, Ser-238 and Thr-300.

Its subcellular location is the cytoplasm. The protein localises to the nucleus. The catalysed reaction is L-seryl-[protein] + ATP = O-phospho-L-seryl-[protein] + ADP + H(+). It catalyses the reaction L-threonyl-[protein] + ATP = O-phospho-L-threonyl-[protein] + ADP + H(+). With respect to regulation, activated following phosphorylation by p38-alpha/MAPK14 following various stresses. Inhibited following sumoylation. Specifically inhibited by pyrrolopyridine inhibitors. In terms of biological role, stress-activated serine/threonine-protein kinase involved in cytokine production, endocytosis, reorganization of the cytoskeleton, cell migration, cell cycle control, chromatin remodeling, DNA damage response and transcriptional regulation. Following stress, it is phosphorylated and activated by MAP kinase p38-alpha/MAPK14, leading to phosphorylation of substrates. Phosphorylates serine in the peptide sequence, Hyd-X-R-X(2)-S, where Hyd is a large hydrophobic residue. Phosphorylates ALOX5, CDC25B, CDC25C, CEP131, ELAVL1, HNRNPA0, HSP27/HSPB1, KRT18, KRT20, LIMK1, LSP1, PABPC1, PARN, PDE4A, RCSD1, RPS6KA3, TAB3 and TTP/ZFP36. Phosphorylates HSF1; leading to the interaction with HSP90 proteins and inhibiting HSF1 homotrimerization, DNA-binding and transactivation activities. Mediates phosphorylation of HSP27/HSPB1 in response to stress, leading to dissociation of HSP27/HSPB1 from large small heat-shock protein (sHsps) oligomers and impairment of their chaperone activities and ability to protect against oxidative stress effectively. Involved in inflammatory response by regulating tumor necrosis factor (TNF) and IL6 production post-transcriptionally: acts by phosphorylating AU-rich elements (AREs)-binding proteins ELAVL1, HNRNPA0, PABPC1 and TTP/ZFP36, leading to regulate the stability and translation of TNF and IL6 mRNAs. Phosphorylation of TTP/ZFP36, a major post-transcriptional regulator of TNF, promotes its binding to 14-3-3 proteins and reduces its ARE mRNA affinity leading to inhibition of dependent degradation of ARE-containing transcripts. Phosphorylates CEP131 in response to cellular stress following ultraviolet irradiation which promotes binding of CEP131 to 14-3-3 proteins and inhibits formation of novel centriolar satellites. Also involved in late G2/M checkpoint following DNA damage through a process of post-transcriptional mRNA stabilization: following DNA damage, relocalizes from nucleus to cytoplasm and phosphorylates HNRNPA0 and PARN, leading to stabilization of GADD45A mRNA. Involved in toll-like receptor signaling pathway (TLR) in dendritic cells: required for acute TLR-induced macropinocytosis by phosphorylating and activating RPS6KA3. This is MAP kinase-activated protein kinase 2 (MAPKAPK2) from Oryctolagus cuniculus (Rabbit).